A 375-amino-acid chain; its full sequence is 4,4'-diaponeurosporenoate glycosyltransferase (375 aa).

A run of 4 helical transmembrane segments spans residues 3 to 23, 164 to 184, 277 to 297, and 330 to 350; these read WLSR…ALIF, FYEG…NVFS, IMTA…GLCL, and FSNL…KIFI.

It belongs to the glycosyltransferase 2 family. CrtQ subfamily.

Its subcellular location is the cell membrane. It participates in carotenoid biosynthesis; staphyloxanthin biosynthesis; staphyloxanthin from farnesyl diphosphate: step 4/5. In terms of biological role, catalyzes the glycosylation of 4,4'-diaponeurosporenoate, i.e. the esterification of glucose at the C1'' position with the carboxyl group of 4,4'-diaponeurosporenic acid, to form glycosyl-4,4'-diaponeurosporenoate. This is a step in the biosynthesis of staphyloxanthin, an orange pigment present in most staphylococci strains. This chain is 4,4'-diaponeurosporenoate glycosyltransferase (crtQ), found in Staphylococcus aureus (strain Mu50 / ATCC 700699).